Here is a 446-residue protein sequence, read N- to C-terminus: C4-dicarboxylate transport protein (446 aa).

9 helical membrane passes run 20 to 40, 56 to 76, 91 to 111, 160 to 180, 200 to 220, 233 to 253, 319 to 339, 344 to 364, and 367 to 387; these read HLYVQVLAAIAIGILLGHFYP, LVKMVIAPVIFLTVVTGIAGM, IYFLTFSTLALIIGLIIANVV, GDILQVLFFSVLFGIALAGVG, LVHILMKAAPIGAFGAMAFTI, FLILTFYITSFLFVVVVLGLV, IYMTLAALFIAQATDIHLSLG, LLLVAMLSSKGAAGITGAGFI, and AATLSVVPTVPLAGMALILGI.

It belongs to the dicarboxylate/amino acid:cation symporter (DAACS) (TC 2.A.23) family.

The protein resides in the cell inner membrane. In terms of biological role, responsible for the transport of dicarboxylates such as succinate, fumarate, and malate from the periplasm across the membrane. This chain is C4-dicarboxylate transport protein, found in Azorhizobium caulinodans (strain ATCC 43989 / DSM 5975 / JCM 20966 / LMG 6465 / NBRC 14845 / NCIMB 13405 / ORS 571).